Reading from the N-terminus, the 596-residue chain is Beta-fructofuranosidase, insoluble isoenzyme 7 (596 aa).

The N-terminal stretch at 1–24 (MARLGLAVCAASFHLFLLLASTSS) is a signal peptide. Substrate contacts are provided by residues 51-54 (WQND), glutamine 70, and tryptophan 78. Residue aspartate 54 is part of the active site. The N-linked (GlcNAc...) asparagine glycan is linked to asparagine 82. Substrate contacts are provided by residues 115–116 (WS), 179–180 (RD), and glutamate 234. A glycan (N-linked (GlcNAc...) asparagine) is linked at asparagine 330. Residues cysteine 432 and cysteine 478 are joined by a disulfide bond. Asparagine 552 is a glycosylation site (N-linked (GlcNAc...) asparagine).

This sequence belongs to the glycosyl hydrolase 32 family. In terms of tissue distribution, expressed in roots, leaves and flowers. Weakly expressed in seeds.

The protein resides in the secreted. The protein localises to the extracellular space. It localises to the apoplast. Its subcellular location is the cell wall. The catalysed reaction is Hydrolysis of terminal non-reducing beta-D-fructofuranoside residues in beta-D-fructofuranosides.. In terms of biological role, may play a role in sucrose partitioning during seed development. The protein is Beta-fructofuranosidase, insoluble isoenzyme 7 (CIN7) of Oryza sativa subsp. japonica (Rice).